The chain runs to 573 residues: Sulfite reductase [NADPH] hemoprotein beta-component (573 aa).

The [4Fe-4S] cluster site is built by C438, C444, C483, and C487. C487 provides a ligand contact to siroheme.

Belongs to the nitrite and sulfite reductase 4Fe-4S domain family. In terms of assembly, alpha(8)-beta(8). The alpha component is a flavoprotein, the beta component is a hemoprotein. It depends on siroheme as a cofactor. [4Fe-4S] cluster is required as a cofactor.

The enzyme catalyses hydrogen sulfide + 3 NADP(+) + 3 H2O = sulfite + 3 NADPH + 4 H(+). It functions in the pathway sulfur metabolism; hydrogen sulfide biosynthesis; hydrogen sulfide from sulfite (NADPH route): step 1/1. Component of the sulfite reductase complex that catalyzes the 6-electron reduction of sulfite to sulfide. This is one of several activities required for the biosynthesis of L-cysteine from sulfate. The sequence is that of Sulfite reductase [NADPH] hemoprotein beta-component from Geobacillus thermodenitrificans (strain NG80-2).